The chain runs to 125 residues: Small ribosomal subunit protein uS12 (125 aa).

The residue at position 89 (D89) is a 3-methylthioaspartic acid.

The protein belongs to the universal ribosomal protein uS12 family. In terms of assembly, part of the 30S ribosomal subunit. Contacts proteins S8 and S17. May interact with IF1 in the 30S initiation complex.

With S4 and S5 plays an important role in translational accuracy. Functionally, interacts with and stabilizes bases of the 16S rRNA that are involved in tRNA selection in the A site and with the mRNA backbone. Located at the interface of the 30S and 50S subunits, it traverses the body of the 30S subunit contacting proteins on the other side and probably holding the rRNA structure together. The combined cluster of proteins S8, S12 and S17 appears to hold together the shoulder and platform of the 30S subunit. In Ralstonia nicotianae (strain ATCC BAA-1114 / GMI1000) (Ralstonia solanacearum), this protein is Small ribosomal subunit protein uS12.